We begin with the raw amino-acid sequence, 192 residues long: MPEGEMMHKLQDVIDRKLLDSRRIFFSEPVTEKSATEAIKKLWYLELTNPGQPIVFVINSPGGSVDAGFAVWDQIKMISSPLTTVVTGLAASMGSVLSLCAVPGRRFATPHARIMIHQPSIGGTITGQATDLDIHAREILKTKARIIDVYVEATGQSREVIEKAIDRDMWMSANEAMEFGLLDGILFSFNDL.

S92 functions as the Nucleophile in the catalytic mechanism. The active site involves H117.

Belongs to the peptidase S14 family. In terms of assembly, fourteen ClpP subunits assemble into 2 heptameric rings which stack back to back to give a disk-like structure with a central cavity, resembling the structure of eukaryotic proteasomes.

It localises to the cytoplasm. The catalysed reaction is Hydrolysis of proteins to small peptides in the presence of ATP and magnesium. alpha-casein is the usual test substrate. In the absence of ATP, only oligopeptides shorter than five residues are hydrolyzed (such as succinyl-Leu-Tyr-|-NHMec, and Leu-Tyr-Leu-|-Tyr-Trp, in which cleavage of the -Tyr-|-Leu- and -Tyr-|-Trp bonds also occurs).. Functionally, cleaves peptides in various proteins in a process that requires ATP hydrolysis. Has a chymotrypsin-like activity. Plays a major role in the degradation of misfolded proteins. The sequence is that of ATP-dependent Clp protease proteolytic subunit 1 from Chlamydia trachomatis serovar D (strain ATCC VR-885 / DSM 19411 / UW-3/Cx).